The primary structure comprises 150 residues: Arginine repressor (150 aa).

It belongs to the ArgR family.

It is found in the cytoplasm. The protein operates within amino-acid biosynthesis; L-arginine biosynthesis [regulation]. Functionally, regulates arginine biosynthesis genes. This chain is Arginine repressor, found in Clostridium acetobutylicum (strain ATCC 824 / DSM 792 / JCM 1419 / IAM 19013 / LMG 5710 / NBRC 13948 / NRRL B-527 / VKM B-1787 / 2291 / W).